A 529-amino-acid polypeptide reads, in one-letter code: Beta-hexosaminidase subunit alpha (529 aa).

Positions Met1–Ala22 are cleaved as a signal peptide. The propeptide occupies Leu23–His88. A disulfide bridge connects residues Cys58 and Cys104. N-linked (GlcNAc...) asparagine glycosylation is found at Asn115, Asn157, and Asn295. A disulfide bond links Cys277 and Cys328. Glu323 serves as the catalytic Proton donor. Residues Asn423–Arg424 form a critical for hydrolysis GM2 gangliosides region. An intrachain disulfide couples Cys505 to Cys522.

It belongs to the glycosyl hydrolase 20 family. There are 3 beta-hexosaminidase isozymes: isozyme A (hexosaminidase A) is a heterodimer composed of one subunit alpha and one subunit beta (chain A and B); isozyme B (hexosaminidase B) is a homodimer of two beta subunits (two chains A and B); isozyme S (hexosaminidase S) is a homodimer of two alpha subunits. The composition of the dimer (isozyme A versus isozyme S) has a significant effect on the substrate specificity of the alpha subunit active site. N-linked glycan at Asn-115 consists of Man(3)-GlcNAc(2). N-linked glycan at Asn-157 consists of either GlcNAc or GlcNAc(2)-Man(7-9). N-linked glycan at Asn-295 consists of either GlcNAc, GlcNAc-Fuc, or GlcNAc(2)-Man(4).

The protein localises to the lysosome. It catalyses the reaction Hydrolysis of terminal non-reducing N-acetyl-D-hexosamine residues in N-acetyl-beta-D-hexosaminides.. It carries out the reaction N-acetyl-beta-D-galactosaminyl-(1-&gt;4)-beta-D-3-sulfogalactosyl-(1-&gt;4)-beta-D-glucosyl-(1&lt;-&gt;1')-ceramide + H2O = a beta-D-3-sulfogalactosyl-(1-&gt;4)-beta-D-glucosyl-(1&lt;-&gt;1')-ceramide + N-acetyl-beta-D-galactosamine. The enzyme catalyses a ganglioside GM2 (d18:1(4E)) + H2O = a ganglioside GM3 (d18:1(4E)) + N-acetyl-beta-D-galactosamine. The catalysed reaction is a ganglioside GM2 + H2O = a ganglioside GM3 + N-acetyl-beta-D-galactosamine. It catalyses the reaction beta-D-GalNAc-(1-&gt;4)-alpha-L-IdoA-(1-&gt;3)-beta-D-GalNAc-4-sulfate-(1-&gt;4)-alpha-L-IdoA-(1-&gt;3)-D-GalNAc-4-sulfate + H2O = alpha-L-IdoA-(1-&gt;3)-beta-D-GalNAc-4-sulfate-(1-&gt;4)-alpha-L-IdoA-(1-&gt;3)-D-GalNAc-4-sulfate + N-acetyl-D-galactosamine. It carries out the reaction N-acetyl-beta-D-6-sulfogalactosaminyl-(1-&gt;4)-alpha-L-iduronyl-(1-&gt;3)-N-acetyl-D-6-sulfogalactosamine + H2O = alpha-L-iduronyl-(1-&gt;3)-N-acetyl-D-6-sulfogalactosamine + N-acetyl-D-6-sulfogalactosamine. With respect to regulation, addition of GM2A stimulates the hydrolysis of sulfated glycosphingolipid SM2 and the ganglioside GM2. Its function is as follows. Hydrolyzes the non-reducing end N-acetyl-D-hexosamine and/or sulfated N-acetyl-D-hexosamine of glycoconjugates, such as the oligosaccharide moieties from proteins and neutral glycolipids, or from certain mucopolysaccharides. The isozyme S is as active as the isozyme A on the anionic bis-sulfated glycans, the chondroitin-6-sulfate trisaccharide (C6S-3), and the dermatan sulfate pentasaccharide, and the sulfated glycosphingolipid SM2. The isozyme B does not hydrolyze each of these substrates, however hydrolyzes efficiently neutral oligosaccharide. Only the isozyme A is responsible for the degradation of GM2 gangliosides in the presence of GM2A. This Homo sapiens (Human) protein is Beta-hexosaminidase subunit alpha.